Consider the following 246-residue polypeptide: Putative S-adenosyl-L-methionine-dependent methyltransferase Mflv_0168 (246 aa).

S-adenosyl-L-methionine-binding positions include Asp-112 and 141 to 142 (DL).

The protein belongs to the UPF0677 family.

Exhibits S-adenosyl-L-methionine-dependent methyltransferase activity. This Mycolicibacterium gilvum (strain PYR-GCK) (Mycobacterium gilvum (strain PYR-GCK)) protein is Putative S-adenosyl-L-methionine-dependent methyltransferase Mflv_0168.